We begin with the raw amino-acid sequence, 580 residues long: High affinity choline transporter 1 (580 aa).

Residues 1-6 (MPFHVE) lie on the Extracellular side of the membrane. Residues 7–27 (GLVAIILFYLLIFLVGIWAAW) form a helical membrane-spanning segment. Residues 28 to 48 (KTKNSGNAEERSEAIIVGGRD) lie on the Cytoplasmic side of the membrane. The helical transmembrane segment at 49 to 69 (IGLLVGGFTMTATWVGGGYIN) threads the bilayer. The Extracellular segment spans residues 70–81 (GTAEAVYGPGCG). The chain crosses the membrane as a helical span at residues 82-102 (LAWAQAPIGYSLSLILGGLFF). The Cytoplasmic segment spans residues 103-125 (AKPMRSKGYVTMLDPFQQIYGKR). A helical transmembrane segment spans residues 126-146 (MGGLLFIPALMGEMFWAAAIF). At 147–164 (SALGATISVIIDVDVNIS) the chain is on the extracellular side. The chain crosses the membrane as a helical span at residues 165–185 (VIVSALIAILYTLVGGLYSVA). Residues 186–191 (YTDVVQ) are Cytoplasmic-facing. Residues 192 to 212 (LFCIFIGLWISVPFALSHPAV) form a helical membrane-spanning segment. The Extracellular portion of the chain corresponds to 213–237 (TDIGFTAVHAKYQSPWLGTIESVEV). Residues 238 to 258 (YTWLDNFLLLMLGGIPWQAYF) form a helical membrane-spanning segment. Topologically, residues 259–274 (QRVLSSSSATYAQVLS) are cytoplasmic. Residues 275–295 (FLAAFGCLVMALPAICIGAIG) form a helical membrane-spanning segment. Residues 296–317 (ASTDWNQTAYGFPDPKTKEEAD) lie on the Extracellular side of the membrane. Asparagine 301 is a glycosylation site (N-linked (GlcNAc...) asparagine). A helical transmembrane segment spans residues 318-338 (MILPIVLQYLCPVYISFFGLG). Residues 339–376 (AVSAAVMSSADSSILSASSMFARNIYQLSFRQNASDKE) are Cytoplasmic-facing. Residues 377-397 (IVWVMRITVFVFGASATAMAL) traverse the membrane as a helical segment. The Extracellular segment spans residues 398-406 (LTKTVYGLW). The chain crosses the membrane as a helical span at residues 407–427 (YLSSDLVYIIIFPQLLCVLFI). Residues 428-435 (KGTNTYGA) lie on the Cytoplasmic side of the membrane. The chain crosses the membrane as a helical span at residues 436–456 (VAGYIFGLFLRITGGEPYLYL). At 457–481 (QPLIFYPGYYPDKNGIYNQRFPFKT) the chain is on the extracellular side. Residues 482 to 502 (LSMVTSFFTNICVSYLAKYLF) traverse the membrane as a helical segment. The tract at residues 502–580 (FESGTLPPKL…EGSGTEDNLQ (79 aa)) is mediates interaction with SEC14L1. The Cytoplasmic portion of the chain corresponds to 503-580 (ESGTLPPKLD…EGSGTEDNLQ (78 aa)). Positions 527 to 532 (DKTILV) match the Dileucine-like motif motif.

The protein belongs to the sodium:solute symporter (SSF) (TC 2.A.21) family. As to quaternary structure, homooligomerizes at cell surface. Interacts with SEC14L1; may regulate SLC5A7. Phosphorylated. As to expression, expressed in basal forebrain, brain stem, spinal chord, and striatum. Specific for cholinergic neurons.

The protein resides in the presynaptic cell membrane. The protein localises to the cell projection. It localises to the axon. It is found in the early endosome membrane. Its subcellular location is the cytoplasmic vesicle. The protein resides in the secretory vesicle. The protein localises to the synaptic vesicle membrane. It catalyses the reaction choline(out) + n Na(+)(out) = choline(in) + n Na(+)(in). Choline uptake activity is regulated by SLC5A7/CHT1 internalization (inactive form) from the cell surface and recycling of internalized SLC5A7/CHT1 into the cell surface (active form). Activated by extracellular chloride ion. Specifically inhibited by nanomolar concentrations of hemicholinium 3. Functionally, high-affinity Na(+)-coupled choline transmembrane symporter. Functions as an electrogenic, voltage-dependent transporter with variable charge/choline stoichiometry. Choline uptake and choline-induced current is also Cl(-)-dependent where Cl(-) is likely a regulatory ion rather than cotransported ion. Plays a critical role in acetylcholine (ACh) synthesis by taking up the substrate choline from the synaptic cleft into the presynaptic nerve terminals after neurotransmitter release. SLC5A7/CHT1-mediated choline high-affinity transport in cholinergic neurons is the rate-limiting step for production of ACh, thereby facilitating communication by subsequent action potentials. Localized predominantly in presynaptic terminal intracellular organelles, and translocated to the plasma membrane in active form in response to neuronal activity. This Rattus norvegicus (Rat) protein is High affinity choline transporter 1.